We begin with the raw amino-acid sequence, 374 residues long: uncharacterized protein (374 aa).

Residues 27–49 form a helical membrane-spanning segment; it reads AISPILALLIVLGVTIVVGAVFY.

The protein localises to the membrane. This is an uncharacterized protein from Methanocaldococcus jannaschii (strain ATCC 43067 / DSM 2661 / JAL-1 / JCM 10045 / NBRC 100440) (Methanococcus jannaschii).